The primary structure comprises 466 residues: Fez family zinc finger protein 1 (466 aa).

The short motif at 34 to 49 (PLAFSIERIMSRTPEP) is the Engrailed homology 1 repressor element. 6 C2H2-type zinc fingers span residues 261-283 (FTCE…MPVH), 289-311 (FVCK…KIIH), 317-339 (HKCN…TRIH), 345-367 (FVCE…KLTH), 373-395 (FKCN…MHTH), and 401-424 (FTCP…RKLH). Positions 446-466 (LPNREQSHTIIQSPQLQKSVY) are disordered. A compositionally biased stretch (polar residues) spans 453–466 (HTIIQSPQLQKSVY).

The protein belongs to the krueppel C2H2-type zinc-finger protein family.

It localises to the nucleus. Transcription repressor. Involved in the development of the forebrain region. This Xenopus laevis (African clawed frog) protein is Fez family zinc finger protein 1 (fezf1).